We begin with the raw amino-acid sequence, 123 residues long: Small ribosomal subunit protein uS12cz/uS12cy (123 aa).

It belongs to the universal ribosomal protein uS12 family. As to quaternary structure, part of the 30S ribosomal subunit.

It localises to the plastid. Its subcellular location is the chloroplast. With S4 and S5 plays an important role in translational accuracy. Located at the interface of the 30S and 50S subunits. The polypeptide is Small ribosomal subunit protein uS12cz/uS12cy (rps12-A) (Angiopteris evecta (Mule's foot fern)).